Consider the following 523-residue polypeptide: GMP synthase [glutamine-hydrolyzing] (523 aa).

Residues 8–205 (KILILDFGSQ…VVGICGCECK (198 aa)) form the Glutamine amidotransferase type-1 domain. Catalysis depends on cysteine 85, which acts as the Nucleophile. Active-site residues include histidine 179 and glutamate 181. Positions 206 to 398 (WTAENIIERR…LGLPAEMLNR (193 aa)) constitute a GMPS ATP-PPase domain. 233 to 239 (SGGVDSS) is a binding site for ATP.

As to quaternary structure, homodimer.

The catalysed reaction is XMP + L-glutamine + ATP + H2O = GMP + L-glutamate + AMP + diphosphate + 2 H(+). It functions in the pathway purine metabolism; GMP biosynthesis; GMP from XMP (L-Gln route): step 1/1. Functionally, catalyzes the synthesis of GMP from XMP. The sequence is that of GMP synthase [glutamine-hydrolyzing] from Actinobacillus pleuropneumoniae serotype 5b (strain L20).